The sequence spans 252 residues: MILHAQAKHGKPGLPWLVFLHGFSGDCHEWQEVGEAFADYSRLYVDLPGHGGSAAISVDGFDDVTDLLRKTLVSYNILDFWLVGYSLGGRVAMMAACQGLAGLCGVIVEGGHPGLQNAEQRAERQRSDRQWVQRFLTEPLTAVFADWYQQPVFASLNDDQRRELVALRSNNNGATLAAMLEATSLAVQPDLRANLSARTFAFYYLCGERDSKFRALAAELAADCHVIPRAGHNAHRENPAGVIASLAQILRF.

The protein belongs to the AB hydrolase superfamily. MenH family. Monomer.

It carries out the reaction 5-enolpyruvoyl-6-hydroxy-2-succinyl-cyclohex-3-ene-1-carboxylate = (1R,6R)-6-hydroxy-2-succinyl-cyclohexa-2,4-diene-1-carboxylate + pyruvate. Its pathway is quinol/quinone metabolism; 1,4-dihydroxy-2-naphthoate biosynthesis; 1,4-dihydroxy-2-naphthoate from chorismate: step 3/7. It functions in the pathway quinol/quinone metabolism; menaquinone biosynthesis. Its function is as follows. Catalyzes a proton abstraction reaction that results in 2,5-elimination of pyruvate from 2-succinyl-5-enolpyruvyl-6-hydroxy-3-cyclohexene-1-carboxylate (SEPHCHC) and the formation of 2-succinyl-6-hydroxy-2,4-cyclohexadiene-1-carboxylate (SHCHC). The polypeptide is 2-succinyl-6-hydroxy-2,4-cyclohexadiene-1-carboxylate synthase (Escherichia coli (strain K12 / MC4100 / BW2952)).